Here is a 437-residue protein sequence, read N- to C-terminus: CMP-5'-(3-aminopropyl)phosphonate hydroxylase (437 aa).

FAD is required as a cofactor.

It catalyses the reaction CMP-5'-(3-aminopropyl)phosphonate + NADPH + O2 = CMP-5'-(N-hydroxy-3-aminopropyl)phosphonate + NADP(+) + H2O. It participates in antibiotic biosynthesis. In terms of biological role, hydroxylase involved in the biosynthesis of the phosphonate antibiotic FR-900098, a potent antimalarial agent that acts as an inhibitor of 1-deoxy-D-xylulose 5-phosphate reductoisomerase (DXR), the first enzyme in the nonmevalonate pathway for isoprenoid biosynthesis. Catalyzes the N-hydroxylation of CMP-5'-3-aminopropylphosphonate (CMP-5'-3APn) to CMP-5'-(N-hydroxy-3-aminopropyl)phosphonate (CMP-5'-H3APn). Cannot use CMP-5'-N-acetyl-3-aminopropylphosphonate (CMP-5'-Ac3APn) as a substrate. This chain is CMP-5'-(3-aminopropyl)phosphonate hydroxylase, found in Streptomyces rubellomurinus (strain ATCC 31215).